The chain runs to 271 residues: Murein DD-endopeptidase MepH (271 aa).

An N-terminal signal peptide occupies residues 1-27 (MARINRISITLCALLFTTLPLTPMAHA). Positions 27-102 (ASKQARESSA…KHAVNKTASA (76 aa)) are disordered. A compositionally biased stretch (basic residues) spans 55 to 64 (KTQKTAKKAA). Over residues 65 to 86 (SKSTTKSKTASSVKKSSITASK) the composition is skewed to low complexity. A NlpC/P60 domain is found at 138-265 (QKATKVAMNK…RHYVGARRVM (128 aa)). Cys169 functions as the Nucleophile in the catalytic mechanism. Catalysis depends on His224, which acts as the Proton acceptor. Residue Gln236 is part of the active site.

It belongs to the peptidase C40 family.

Its pathway is cell wall biogenesis; cell wall polysaccharide biosynthesis. In terms of biological role, a murein DD-endopeptidase with specificity for D-Ala-meso-diaminopimelic acid (mDAP) cross-links. Its role is probably to cleave D-Ala-mDAP cross-links to allow insertion of new glycans and thus cell wall expansion. Functionally redundant with MepM and MepH. Partially suppresses an mepS disruption mutant. In Escherichia coli (strain K12), this protein is Murein DD-endopeptidase MepH (mepH).